A 728-amino-acid chain; its full sequence is Elongation factor 2 (728 aa).

Positions 19–261 (EHIRNIAIAA…MVCEHFPNPV (243 aa)) constitute a tr-type G domain. GTP-binding positions include 28–35 (AHVDHGKT), 94–98 (DTPGH), and 148–151 (NKVD). Residue H596 is modified to Diphthamide.

Belongs to the TRAFAC class translation factor GTPase superfamily. Classic translation factor GTPase family. EF-G/EF-2 subfamily.

Its subcellular location is the cytoplasm. In terms of biological role, catalyzes the GTP-dependent ribosomal translocation step during translation elongation. During this step, the ribosome changes from the pre-translocational (PRE) to the post-translocational (POST) state as the newly formed A-site-bound peptidyl-tRNA and P-site-bound deacylated tRNA move to the P and E sites, respectively. Catalyzes the coordinated movement of the two tRNA molecules, the mRNA and conformational changes in the ribosome. In Haloarcula marismortui (strain ATCC 43049 / DSM 3752 / JCM 8966 / VKM B-1809) (Halobacterium marismortui), this protein is Elongation factor 2.